Reading from the N-terminus, the 127-residue chain is Large ribosomal subunit protein bL20 (127 aa).

Belongs to the bacterial ribosomal protein bL20 family.

Binds directly to 23S ribosomal RNA and is necessary for the in vitro assembly process of the 50S ribosomal subunit. It is not involved in the protein synthesizing functions of that subunit. This Bifidobacterium longum (strain DJO10A) protein is Large ribosomal subunit protein bL20.